The chain runs to 71 residues: Small ribosomal subunit protein bS18 (71 aa).

This sequence belongs to the bacterial ribosomal protein bS18 family. In terms of assembly, part of the 30S ribosomal subunit. Forms a tight heterodimer with protein bS6.

Binds as a heterodimer with protein bS6 to the central domain of the 16S rRNA, where it helps stabilize the platform of the 30S subunit. This is Small ribosomal subunit protein bS18 from Synechocystis sp. (strain ATCC 27184 / PCC 6803 / Kazusa).